Reading from the N-terminus, the 199-residue chain is Patulin biosynthesis cluster protein F (199 aa).

The N-terminal stretch at 1 to 21 is a signal peptide; sequence MKSSLWVSLAVSLIGLGPAAA. 2 N-linked (GlcNAc...) asparagine glycosylation sites follow: Asn-129 and Asn-183.

It belongs to the patF family.

The protein localises to the cytoplasm. The protein resides in the cytosol. The catalysed reaction is phyllostine = neopatulin. The protein operates within mycotoxin biosynthesis; patulin biosynthesis. Functionally, part of the gene cluster that mediates the biosynthesis of patulin, an acetate-derived tetraketide mycotoxin produced by several fungal species that shows antimicrobial properties against several bacteria. PatF catalyzes the conversion of phyllostine into neopatulin. The pathway begins with the synthesis of 6-methylsalicylic acid by the polyketide synthase (PKS) patK via condensation of acetate and malonate units. The 6-methylsalicylic acid decarboxylase patG then catalyzes the decarboxylation of 6-methylsalicylic acid to yield m-cresol (also known as 3-methylphenol). These first reactions occur in the cytosol. The intermediate m-cresol is then transported into the endoplasmic reticulum where the cytochrome P450 monooxygenase patH converts it to m-hydroxybenzyl alcohol, which is further converted to gentisyl alcohol by the cytochrome P450 monooxygenase patI. The oxidoreductases patJ and patO further convert gentisyl alcohol to isoepoxydon in the vacuole. PatN catalyzes then the transformation of isoepoxydon into phyllostine. The cluster protein patF is responsible for the conversion from phyllostine to neopatulin whereas the alcohol dehydrogenase patD converts neopatulin to E-ascladiol. The steps between isoepoxydon and E-ascladiol occur in the cytosol, and E-ascladiol is probably secreted to the extracellular space by one of the cluster-specific transporters patC or patM. Finally, the secreted patulin synthase patE catalyzes the conversion of E-ascladiol to patulin. The polypeptide is Patulin biosynthesis cluster protein F (Penicillium expansum (Blue mold rot fungus)).